Reading from the N-terminus, the 34-residue chain is SCVDFQTKCKKDSDCCGKLECSSRWKWCVYPSPF.

3 disulfide bridges follow: Cys2–Cys16, Cys9–Cys21, and Cys15–Cys28.

As to expression, expressed by the venom gland.

It is found in the secreted. This chain is U2-theraphotoxin-Bs1a, found in Brachypelma smithi (Mexican red knee tarantula).